The primary structure comprises 89 residues: Tuberculin-active protein (89 aa).

A disulfide bridge links Cys27 with Cys59. Residues 61-89 (DGGSESEGKNGSQMRLIADVGPESATVAK) form a disordered region.

Tuberculin is the soluble, proteinaceous cell substance of the bacterium, to which infected animals become hypersensitive and react characteristically to dermal injections. The protein is Tuberculin-active protein of Mycobacterium tuberculosis.